Consider the following 259-residue polypeptide: tRNA pseudouridine synthase A (259 aa).

The active-site Nucleophile is Asp-51. Tyr-109 is a binding site for substrate.

It belongs to the tRNA pseudouridine synthase TruA family. Homodimer.

The catalysed reaction is uridine(38/39/40) in tRNA = pseudouridine(38/39/40) in tRNA. Functionally, formation of pseudouridine at positions 38, 39 and 40 in the anticodon stem and loop of transfer RNAs. The polypeptide is tRNA pseudouridine synthase A (Nitrosococcus oceani (strain ATCC 19707 / BCRC 17464 / JCM 30415 / NCIMB 11848 / C-107)).